The primary structure comprises 126 residues: Holo-[acyl-carrier-protein] synthase (126 aa).

Residues Asp9 and Glu58 each contribute to the Mg(2+) site.

Belongs to the P-Pant transferase superfamily. AcpS family. The cofactor is Mg(2+).

It localises to the cytoplasm. It catalyses the reaction apo-[ACP] + CoA = holo-[ACP] + adenosine 3',5'-bisphosphate + H(+). Its function is as follows. Transfers the 4'-phosphopantetheine moiety from coenzyme A to a Ser of acyl-carrier-protein. This chain is Holo-[acyl-carrier-protein] synthase, found in Serratia proteamaculans (strain 568).